The following is a 160-amino-acid chain: 2-amino-4-hydroxy-6-hydroxymethyldihydropteridine pyrophosphokinase (160 aa).

The protein belongs to the HPPK family.

It carries out the reaction 6-hydroxymethyl-7,8-dihydropterin + ATP = (7,8-dihydropterin-6-yl)methyl diphosphate + AMP + H(+). It functions in the pathway cofactor biosynthesis; tetrahydrofolate biosynthesis; 2-amino-4-hydroxy-6-hydroxymethyl-7,8-dihydropteridine diphosphate from 7,8-dihydroneopterin triphosphate: step 4/4. Catalyzes the transfer of pyrophosphate from adenosine triphosphate (ATP) to 6-hydroxymethyl-7,8-dihydropterin, an enzymatic step in folate biosynthesis pathway. The chain is 2-amino-4-hydroxy-6-hydroxymethyldihydropteridine pyrophosphokinase (folK) from Aquifex aeolicus (strain VF5).